The chain runs to 1060 residues: Carbamoyl phosphate synthase large chain (1060 aa).

The interval 1 to 401 is carboxyphosphate synthetic domain; the sequence is MPKRQDIHKI…SLLKAVRSLE (401 aa). Positions 129, 169, 175, 176, 208, 210, 215, 241, 242, 243, 284, and 298 each coordinate ATP. Residues 133–327 enclose the ATP-grasp 1 domain; it reads KNLMQKLHEP…IAKMAAKIAV (195 aa). Residues Gln-284, Glu-298, and Asn-300 each contribute to the Mg(2+) site. Mn(2+)-binding residues include Gln-284, Glu-298, and Asn-300. The interval 402 to 546 is oligomerization domain; sequence VGLIHPERPA…YSTYESSTES (145 aa). The interval 547–929 is carbamoyl phosphate synthetic domain; it reads VKSDKPSVLV…ALYKAFEAAG (383 aa). The ATP-grasp 2 domain occupies 671 to 861; it reads DQVIKSLKLP…LAQVATLAIL (191 aa). ATP contacts are provided by Arg-707, His-746, Leu-748, Glu-752, Gly-777, Ile-778, His-779, Ser-780, Gln-820, and Glu-832. Gln-820, Glu-832, and Asn-834 together coordinate Mg(2+). Residues Gln-820, Glu-832, and Asn-834 each coordinate Mn(2+). An MGS-like domain is found at 930 to 1060; that stretch reads MHLPQFGRAL…QAFSISPIKS (131 aa). Positions 930-1060 are allosteric domain; the sequence is MHLPQFGRAL…QAFSISPIKS (131 aa).

It belongs to the CarB family. As to quaternary structure, composed of two chains; the small (or glutamine) chain promotes the hydrolysis of glutamine to ammonia, which is used by the large (or ammonia) chain to synthesize carbamoyl phosphate. Tetramer of heterodimers (alpha,beta)4. Mg(2+) serves as cofactor. Mn(2+) is required as a cofactor.

It carries out the reaction hydrogencarbonate + L-glutamine + 2 ATP + H2O = carbamoyl phosphate + L-glutamate + 2 ADP + phosphate + 2 H(+). It catalyses the reaction hydrogencarbonate + NH4(+) + 2 ATP = carbamoyl phosphate + 2 ADP + phosphate + 2 H(+). Its pathway is amino-acid biosynthesis; L-arginine biosynthesis; carbamoyl phosphate from bicarbonate: step 1/1. It participates in pyrimidine metabolism; UMP biosynthesis via de novo pathway; (S)-dihydroorotate from bicarbonate: step 1/3. Functionally, large subunit of the glutamine-dependent carbamoyl phosphate synthetase (CPSase). CPSase catalyzes the formation of carbamoyl phosphate from the ammonia moiety of glutamine, carbonate, and phosphate donated by ATP, constituting the first step of 2 biosynthetic pathways, one leading to arginine and/or urea and the other to pyrimidine nucleotides. The large subunit (synthetase) binds the substrates ammonia (free or transferred from glutamine from the small subunit), hydrogencarbonate and ATP and carries out an ATP-coupled ligase reaction, activating hydrogencarbonate by forming carboxy phosphate which reacts with ammonia to form carbamoyl phosphate. The protein is Carbamoyl phosphate synthase large chain of Lacticaseibacillus paracasei (strain ATCC 334 / BCRC 17002 / CCUG 31169 / CIP 107868 / KCTC 3260 / NRRL B-441) (Lactobacillus paracasei).